The sequence spans 291 residues: Protease HtpX homolog (291 aa).

The next 2 helical transmembrane spans lie at Val4–Leu24 and Met38–Leu58. His144 is a binding site for Zn(2+). The active site involves Glu145. His148 contributes to the Zn(2+) binding site. The next 2 membrane-spanning stretches (helical) occupy residues Leu159–Leu179 and Ile199–Phe219. Glu224 lines the Zn(2+) pocket.

This sequence belongs to the peptidase M48B family. It depends on Zn(2+) as a cofactor.

The protein resides in the cell inner membrane. In Chlorobium phaeovibrioides (strain DSM 265 / 1930) (Prosthecochloris vibrioformis (strain DSM 265)), this protein is Protease HtpX homolog.